Consider the following 76-residue polypeptide: cAMP-dependent protein kinase inhibitor alpha (76 aa).

Threonine 2 bears the N-acetylthreonine mark. Positions 49–76 are disordered; that stretch reads KTEGEEDAQRSSTEQSGEAQGEAAKSES.

The protein belongs to the PKI family.

Its function is as follows. Extremely potent competitive inhibitor of cAMP-dependent protein kinase activity, this protein interacts with the catalytic subunit of the enzyme after the cAMP-induced dissociation of its regulatory chains. The polypeptide is cAMP-dependent protein kinase inhibitor alpha (PKIA) (Homo sapiens (Human)).